Here is a 451-residue protein sequence, read N- to C-terminus: MKYFGTDGVRGIANSGLTPEMAFRLGRAGGYVLTEHAENKSTQPRVLVARDTRISGQMLEEALIAGLLSAGIEVLRLGVITTPGVAYLVRIQDADAGVMISASHNPVEDNGIKFFGGDGFKLSDAKEEEIEELLDQPKDTLPRPAAEGLGTVADFPEGNLKYSQFLEQTIPDDLSGIHLAVDGANGSTSNLVSRIFADLNVEFDTMATAPDGLNINKGVGSTHPEALSKFVVEKGAQVGLAFDGDGDRCIAVDELGNIIDGDKIMYICGKFLSERGKLKQDTVVTTVMSNLGLYKALEAAGLHSKQTQVGDRYVVEEMLKDGYNLGGEQSGHVVFLDFNTTGDGMLTGIQLLHVMKETGKKLSELAAEVTTYPQKLVNVKVQDKKAALNNDKIKAVIKDVEDEMAGDGRVLVRPSGTQDLLRVMAEAKTDELVSAYVDRIVDVVKAEVGIE.

S103 acts as the Phosphoserine intermediate in catalysis. Mg(2+)-binding residues include S103, D243, D245, and D247. S103 carries the phosphoserine modification.

This sequence belongs to the phosphohexose mutase family. The cofactor is Mg(2+). Activated by phosphorylation.

It carries out the reaction alpha-D-glucosamine 1-phosphate = D-glucosamine 6-phosphate. Catalyzes the conversion of glucosamine-6-phosphate to glucosamine-1-phosphate. In Lactiplantibacillus plantarum (strain ATCC BAA-793 / NCIMB 8826 / WCFS1) (Lactobacillus plantarum), this protein is Phosphoglucosamine mutase.